We begin with the raw amino-acid sequence, 155 residues long: MHPFQWCNGCFCGLGLVSTNKSCSMPPISFQDLPLNIYMVIFGTGIFVFMLSLIFCCYFISKLRNQAQSERYGYKEVVLKGDAKKLQLYGQTCAVCLEDFKGKDELGVLPCQHAFHRKCLVKWLEVRCVCPMCNKPIAGPTETSQSIGILLDELV.

The helical transmembrane segment at 40–60 (VIFGTGIFVFMLSLIFCCYFI) threads the bilayer. The segment at 93–134 (CAVCLEDFKGKDELGVLPCQHAFHRKCLVKWLEVRCVCPMCN) adopts an RING-type; atypical zinc-finger fold.

It localises to the golgi apparatus. It is found in the endoplasmic reticulum. The protein resides in the membrane. Its function is as follows. May induce necrosis and apoptosis. May play a role in cell viability. This is RING finger protein 122 (Rnf122) from Mus musculus (Mouse).